The sequence spans 102 residues: Small ribosomal subunit protein uS10 (102 aa).

This sequence belongs to the universal ribosomal protein uS10 family. Part of the 30S ribosomal subunit.

Its function is as follows. Involved in the binding of tRNA to the ribosomes. In Bacillus cereus (strain G9842), this protein is Small ribosomal subunit protein uS10.